Consider the following 141-residue polypeptide: Lutropin subunit beta (141 aa).

The N-terminal stretch at 1-21 (MERYQELTVLLLLLLLEGGSG) is a signal peptide. Cystine bridges form between C30/C78, C44/C93, C47/C131, C55/C109, C59/C111, and C114/C121. N34 is a glycosylation site (N-linked (GlcNAc...) asparagine).

The protein belongs to the glycoprotein hormones subunit beta family. In terms of assembly, heterodimer of a common alpha chain and a unique beta chain which confers biological specificity to thyrotropin, lutropin, follitropin and gonadotropin.

The protein resides in the secreted. Functionally, promotes spermatogenesis and ovulation by stimulating the testes and ovaries to synthesize steroids. This is Lutropin subunit beta (LHB) from Monodelphis domestica (Gray short-tailed opossum).